We begin with the raw amino-acid sequence, 162 residues long: CASP-like protein 1C2 (162 aa).

Residues 1–6 lie on the Cytoplasmic side of the membrane; the sequence is MMKPKR. Residues 7 to 27 traverse the membrane as a helical segment; the sequence is LLSLLLRLIAVGATLAAVIIM. Topologically, residues 28–49 are extracellular; it reads ATSHEKGTFFAVSYEAKYTDTP. A helical membrane pass occupies residues 50–70; that stretch reads AFKYFVIANAIVTVYGFLVLF. At 71-79 the chain is on the cytoplasmic side; that stretch reads HPPGSPLWR. Residues 80–100 traverse the membrane as a helical segment; it reads LVLALDLVFTMLLISSISAAL. Over 101 to 130 the chain is Extracellular; it reads AVAQVGKNGNSRAGWLPVCGQVTKYCNQVT. Residues 131–151 form a helical membrane-spanning segment; that stretch reads GALVAGLIALITYIILLLHSI. The Cytoplasmic segment spans residues 152–162; sequence YTFLNPLLEKA.

It belongs to the Casparian strip membrane proteins (CASP) family. As to quaternary structure, homodimer and heterodimers.

It localises to the cell membrane. This Populus trichocarpa (Western balsam poplar) protein is CASP-like protein 1C2.